A 439-amino-acid chain; its full sequence is Proline--tRNA ligase (439 aa).

The protein belongs to the class-II aminoacyl-tRNA synthetase family. ProS type 2 subfamily. Homodimer.

The protein localises to the cytoplasm. The enzyme catalyses tRNA(Pro) + L-proline + ATP = L-prolyl-tRNA(Pro) + AMP + diphosphate. In terms of biological role, catalyzes the attachment of proline to tRNA(Pro) in a two-step reaction: proline is first activated by ATP to form Pro-AMP and then transferred to the acceptor end of tRNA(Pro). The protein is Proline--tRNA ligase of Bradyrhizobium diazoefficiens (strain JCM 10833 / BCRC 13528 / IAM 13628 / NBRC 14792 / USDA 110).